A 396-amino-acid polypeptide reads, in one-letter code: MSDTLLNPYFGEFGGMYVPEILVPVLKQLEETFVAAQNDPLFQAEFTDLLKNYAGRPTALTLCRNLTKGSKTKLYLKREDLLHGGAHKTNQVLGQALLAKRMGKTRIIAETGAGQHGVATALACAMLDLPCVIYMGAKDVERQSPNVFRMRLMGAEVIPVQKGSCSLKDACCEAMRDWAANYETTHYLIGTAAGPHPFPTMVREFQKMIGEETKRQILEKENRLPDAVIAAVGGGSNAIGMFAGFIEEKSVQLIGVEPAGKGIETGEHGAPLKHGTTGIYFGMKSPIMQTKDGQIEESYSISAGLDFPSVGPQHAYLNASGRADYVSITDKEALDAFQALAQHEGIIPALESSHALAYALKLIAQNPDKEQLLVVNLSGRGDKDIFTVDKILNGGN.

At K88 the chain carries N6-(pyridoxal phosphate)lysine.

Belongs to the TrpB family. As to quaternary structure, tetramer of two alpha and two beta chains. Pyridoxal 5'-phosphate is required as a cofactor.

It catalyses the reaction (1S,2R)-1-C-(indol-3-yl)glycerol 3-phosphate + L-serine = D-glyceraldehyde 3-phosphate + L-tryptophan + H2O. It participates in amino-acid biosynthesis; L-tryptophan biosynthesis; L-tryptophan from chorismate: step 5/5. Its function is as follows. The beta subunit is responsible for the synthesis of L-tryptophan from indole and L-serine. The chain is Tryptophan synthase beta chain from Actinobacillus pleuropneumoniae serotype 7 (strain AP76).